A 1138-amino-acid chain; its full sequence is Condensin-2 complex subunit G2 (1138 aa).

Phosphoserine is present on S30. The stretch at L459–C497 is one HEAT repeat. T1114 is subject to Phosphothreonine.

Component of the condensin-2 complex, which contains the SMC2 and SMC4 heterodimer, and 3 non SMC subunits that probably regulate the complex: NCAPH2, NCAPD3 and NCAPG2. Expressed in spleen, lung and testis as well as in hematopoietic cell lines.

The protein resides in the nucleus. In terms of biological role, regulatory subunit of the condensin-2 complex, a complex which establishes mitotic chromosome architecture and is involved in physical rigidity of the chromatid axis. Is required for early embryonic development and is essential for viability and expansion of the inner cell mass (ICM) of the implanting blastocyst. The sequence is that of Condensin-2 complex subunit G2 (Ncapg2) from Mus musculus (Mouse).